A 206-amino-acid chain; its full sequence is uncharacterized protein (206 aa).

The first 18 residues, 1-18 (MSSLVLIPCALLTQGIYA), serve as a signal peptide directing secretion.

This is an uncharacterized protein from Acanthamoeba polyphaga mimivirus (APMV).